Here is a 251-residue protein sequence, read N- to C-terminus: Ubiquinone/menaquinone biosynthesis C-methyltransferase UbiE (251 aa).

S-adenosyl-L-methionine is bound by residues T74, D95, and 123–124; that span reads NA.

It belongs to the class I-like SAM-binding methyltransferase superfamily. MenG/UbiE family.

The catalysed reaction is a 2-demethylmenaquinol + S-adenosyl-L-methionine = a menaquinol + S-adenosyl-L-homocysteine + H(+). It catalyses the reaction a 2-methoxy-6-(all-trans-polyprenyl)benzene-1,4-diol + S-adenosyl-L-methionine = a 5-methoxy-2-methyl-3-(all-trans-polyprenyl)benzene-1,4-diol + S-adenosyl-L-homocysteine + H(+). It functions in the pathway quinol/quinone metabolism; menaquinone biosynthesis; menaquinol from 1,4-dihydroxy-2-naphthoate: step 2/2. The protein operates within cofactor biosynthesis; ubiquinone biosynthesis. Its function is as follows. Methyltransferase required for the conversion of demethylmenaquinol (DMKH2) to menaquinol (MKH2) and the conversion of 2-polyprenyl-6-methoxy-1,4-benzoquinol (DDMQH2) to 2-polyprenyl-3-methyl-6-methoxy-1,4-benzoquinol (DMQH2). The chain is Ubiquinone/menaquinone biosynthesis C-methyltransferase UbiE from Shewanella frigidimarina (strain NCIMB 400).